Consider the following 383-residue polypeptide: Creatine kinase, testis isozyme (383 aa).

The 87-residue stretch at 14–100 (KRLSPEEEFP…LDPIIEDRHG (87 aa)) folds into the Phosphagen kinase N-terminal domain. Positions 99–112 (HGGYKPTDKHKTDL) are enriched in basic and acidic residues. The disordered stretch occupies residues 99–119 (HGGYKPTDKHKTDLNPDNLKG). Residues 127 to 369 (YVISSRVRTG…KLLVEMEKKL (243 aa)) form the Phosphagen kinase C-terminal domain. ATP-binding positions include 130–134 (SSRVR), His-193, Arg-238, Arg-294, 322–327 (RGTGGV), and Asp-337.

It belongs to the ATP:guanido phosphotransferase family. Exists in many tissues, but preferentially in testis.

The enzyme catalyses creatine + ATP = N-phosphocreatine + ADP + H(+). In terms of biological role, reversibly catalyzes the transfer of phosphate between ATP and various phosphogens (e.g. creatine phosphate). Creatine kinase isoenzymes play a central role in energy transduction in tissues with large, fluctuating energy demands, such as skeletal muscle, heart, brain and spermatozoa. The sequence is that of Creatine kinase, testis isozyme (tck1) from Oncorhynchus mykiss (Rainbow trout).